The primary structure comprises 1288 residues: Outer capsid protein lambda-2 (1288 aa).

ATP is bound at residue 892 to 899 (GAAAAGKS).

Belongs to the orthoreovirus lambda-2 protein family. As to quaternary structure, interacts with protein mu-NS; in viral inclusions.

The protein resides in the virion. It catalyses the reaction a 5'-end diphospho-ribonucleoside in mRNA + GTP + H(+) = a 5'-end (5'-triphosphoguanosine)-ribonucleoside in mRNA + diphosphate. The catalysed reaction is a 5'-end (5'-triphosphoguanosine)-ribonucleoside in mRNA + S-adenosyl-L-methionine = a 5'-end (N(7)-methyl 5'-triphosphoguanosine)-ribonucleoside in mRNA + S-adenosyl-L-homocysteine. Outer capsid protein involved in mRNA capping. Catalyzes the last 3 enzymatic activities for formation of the 5' cap structure on the viral plus-strand transcripts, namely the RNA guanylyltransferase, RNA-7N- and RNA-2'O-methyltransferase activities. This is Outer capsid protein lambda-2 (L2) from Reovirus type 2 (strain D5/Jones) (T2J).